The sequence spans 1357 residues: MAYSYTEKKRIRKDFSKLPDVMDVPYLLAIQLDSYREFLQAGATKEQFRDIGLHAAFKSVFPIISYSGNAALEYVGYRLGEPAFDVKECVLRGVTFAVPLRVKVRLIIFDRESSNKAIKDIKEQEVYMGEIPLMTENGTFIINGTERVIVSQLHRSPGVFFDHDRGKTHSSGKLLYSARIIPYRGSWLDFEFDPKDCVFVRIDRRRKLPASVLLRALGYSTEEILNAFYATNVFHIKGETLNLELVPQRLRGEVASIDIKDGSGKVIVEQGRRITARHINQLEKAGVSQLEVPFDYLIGRTIAKAIVHPATGEIIAECNTELTLDLLAKVAKAQVVRIETLYTNDIDCGPFISDTLKIDNTSNQLEALVEIYRMMRPGEPPTKEAAETLFGNLFFSAERYDLSAVGRMKFNRRIGRTEIEGPGVLSKEDIIDVLKTLVDIRNGKGIVDDIDHLGNRRVRCVGEMAENQFRVGLVRVERAVKERLSMAESEGLMPQDLINAKPVAAAIKEFFGSSQLSQFMGQNNPLSEITHKRRVSALGPGGLTRERAGFEVRDVHPTHYGRVCPIETPEGPNIGLINSLATYARTNKYGFLESPYRVVKDSLVTDEIVFLSAIEEADHVIAQASATLNEKGQLVDELVAVRHLNEFTVKAPEDVTLMDVSPKQVVSVAASLIPFLEHDDANRALMGSNMQRQAVPTLRADKPLVGTGMERNVARDSGVCVVARRGGVIDSVDASRVVVRVADDEVETGEAGVDIYNLTKYTRSNQNTCINQRPLVSKGDVVARGDILADGPSTDMGELALGQNMRVAFMPWNGFNFEDSICLSERVVQEDRFTTIHIQELTCVARDTKLGPEEITADIPNVGEAALNKLDEAGIVYVGAEVQAGDILVGKVTPKGETQLTPEEKLLRAIFGEKASDVKDTSLRVPTGTKGTVIDVQVFTRDGVERDSRALSIEKMQLDQIRKDLNEEFRIVEGATFERLRAALVGAKAEGGPALKKGTEITDDYLDGLERGQWFKLRMADDALNEQLEKAQAYISDRRQLLDDKFEDKKRKLQQGDDLAPGVLKIVKVYLAIKRRIQPGDKMAGRHGNKGVVSVIMPVEDMPHDANGTPVDIVLNPLGVPSRMNVGQILETHLGLAAKGLGEKINRMLEEQRKVAELRKFLHEIYNEIGGREENLDELGDNEILALAKNLRGGVPMATPVFDGAKEREIKAMLKLADLPESGQMRLFDGRTGNQFERPTTVGYMYMLKLNHLVDDKMHARSTGSYSLVTQQPLGGKAQFGGQRFGEMEVWALEAYGAAYTLQEMLTVKSDDVNGRTKMYKNIVDGDHRMEAGMPESFNVLIKEIRSLGIDIELETE.

This sequence belongs to the RNA polymerase beta chain family. The RNAP catalytic core consists of 2 alpha, 1 beta, 1 beta' and 1 omega subunit. When a sigma factor is associated with the core the holoenzyme is formed, which can initiate transcription.

It carries out the reaction RNA(n) + a ribonucleoside 5'-triphosphate = RNA(n+1) + diphosphate. DNA-dependent RNA polymerase catalyzes the transcription of DNA into RNA using the four ribonucleoside triphosphates as substrates. This Pseudomonas aeruginosa (strain UCBPP-PA14) protein is DNA-directed RNA polymerase subunit beta.